We begin with the raw amino-acid sequence, 545 residues long: Baeyer-Villiger monooxygenase (545 aa).

F24, D45, W54, D65, Y71, and V118 together coordinate FAD.

This sequence belongs to the FAD-binding monooxygenase family. FAD serves as cofactor.

Functionally, catalyzes a Baeyer-Villiger oxidation reaction, i.e. the insertion of an oxygen atom into a carbon-carbon bond adjacent to a carbonyl, which converts ketones to esters or lactones using NADPH as an electron donor. Besides cycloalkanones, can use cyclic alpha,beta-unsaturated ketones as substrates, leading to conjugated ene-lactones. Can also act on methylated cycloalkanones and methylated cycloalkenones with high enantioselectivity in some cases. The sequence is that of Baeyer-Villiger monooxygenase from Pseudooceanicola batsensis (strain ATCC BAA-863 / DSM 15984 / KCTC 12145 / HTCC2597) (Oceanicola batsensis).